We begin with the raw amino-acid sequence, 681 residues long: Glycogen-binding subunit 76A (681 aa).

Disordered regions lie at residues M1–P20, L53–P94, S232–L251, F285–L391, and Q405–Q435. Over residues E59–P69 the composition is skewed to acidic residues. The segment covering N72–D91 has biased composition (polar residues). Composition is skewed to basic and acidic residues over residues E237–L251, R297–P308, and P321–E336. The span at T353–E364 shows a compositional bias: polar residues. Residues R365–E374 are compositionally biased toward basic and acidic residues. Residues A525–Q632 form the CBM21 domain. T545 is modified (phosphothreonine). 2 positions are modified to phosphoserine: S547 and S549.

The polypeptide is Glycogen-binding subunit 76A (Gbs-76A) (Drosophila melanogaster (Fruit fly)).